We begin with the raw amino-acid sequence, 525 residues long: MTENIHKHRILILDFGSQYTQLVARRVRELGVYCELWAWDVTEAQIRDFNPSGIILSGGPESTTEENSPRALQYVFEAGVPVFGVCYGMQTMAMQLGGHVEGSNEREFGYAQVEVLTDSALVRGIEDSLTADGKPLLDVWMSHGDKVTAIPSDFVTVASTESCPFAIMANEEKRFYGVQFHPEVTHTRQGMRMLERFVRDICQCEALWTPAKIIDDAVARIREQVGDDKVILGLSGGVDSSVTAMLLHRAIGKNLTCVFVDNGLLRLNEAEQVMDMFGDHFGLNIVHVPAEERFLSALAGENDPEAKRKIIGRVFVEVFDEEALKLEDVKWLAQGTIYPDVIESAASATGKAHVIKSHHNVGGLPKEMKMGLVEPLKELFKDEVRKIGLELGLPYDMLYRHPFPGPGLGVRVLGEVKKEYCDLLRRADAIFIEELRKADLYDKVSQAFTVFLPVRSVGVMGDGRKYDWVVSLRAVETIDFMTAHWAHLPYDFLGRVSNRIINEVNGISRVVYDISGKPPATIEWE.

One can recognise a Glutamine amidotransferase type-1 domain in the interval 9–207 (RILILDFGSQ…VRDICQCEAL (199 aa)). The active-site Nucleophile is Cys86. Residues His181 and Glu183 contribute to the active site. The 193-residue stretch at 208–400 (WTPAKIIDDA…LGLPYDMLYR (193 aa)) folds into the GMPS ATP-PPase domain. 235–241 (SGGVDSS) contributes to the ATP binding site.

In terms of assembly, homodimer.

The catalysed reaction is XMP + L-glutamine + ATP + H2O = GMP + L-glutamate + AMP + diphosphate + 2 H(+). Its pathway is purine metabolism; GMP biosynthesis; GMP from XMP (L-Gln route): step 1/1. In terms of biological role, catalyzes the synthesis of GMP from XMP. The polypeptide is GMP synthase [glutamine-hydrolyzing] (Salmonella typhimurium (strain LT2 / SGSC1412 / ATCC 700720)).